The sequence spans 824 residues: Tuftelin-interacting protein 11 (824 aa).

The disordered stretch occupies residues 1–135; it reads MSMSHLYGKD…RTFAGGIKSN (135 aa). Over residues 11–25 the composition is skewed to acidic residues; the sequence is EDSDGVEMENFEITD. Basic and acidic residues-rich tracts occupy residues 41 to 61 and 85 to 114; these read QTKE…DERP and PAAE…EAKK. Residues 122–135 are compositionally biased toward polar residues; the sequence is KPSQRTFAGGIKSN. Residues 145–191 form the G-patch domain; it reads TKGIGQKLLQKMGYMPGRGLGKNAQGIIAPIEAKQRRGKGAVGAYGS.

It belongs to the TFP11/STIP family. As to quaternary structure, identified in the spliceosome C complex.

Its subcellular location is the nucleus. Its function is as follows. Involved in pre-mRNA splicing, specifically in spliceosome disassembly during late-stage splicing events. In Xenopus laevis (African clawed frog), this protein is Tuftelin-interacting protein 11 (tfip11).